The chain runs to 509 residues: E3 ubiquitin-protein ligase RAD18 (509 aa).

N-acetylmethionine is present on M1. Residues 25 to 64 (CGICFEYFNIAVIIPQCSHNYCSLCIRKFLSYKTQCPTCC) form an RING-type zinc finger. Residues S99, S103, S158, and S164 each carry the phosphoserine modification. The UBZ4-type zinc-finger motif lies at 201-228 (KVSCPVCGVSIPENHINKHLDSCLSREE). 4 residues coordinate Zn(2+): C204, C207, H219, and C223. The LR motif signature appears at 232–240 (SLRSSAHKR). Residues 248–282 (YNLLSDRDLKKKLKQYGLSVQGNKQQLIKRHQEFV) form the SAP domain. Disordered stretches follow at residues 365 to 401 (GRVSQAAAMRTDEPAETLPSMRTDEPAETLPSMRTDE) and 435 to 509 (VSVT…RNKN). 2 stretches are compositionally biased toward polar residues: residues 435–446 (VSVTNHFPQPQL) and 463–473 (CTDILFSSDSD). S485 carries the post-translational modification Phosphoserine. Residues 493–509 (RASECVEIEPRNKRNKN) are compositionally biased toward basic and acidic residues.

The protein belongs to the RAD18 family. As to quaternary structure, homodimer. Interacts with UBE2A and UBE2B, one homodimer binding one molecule of UBE2B. Interacts with HLTF. Interacts with SHPRH. Interacts with SPRTN; leading to enhance chromatin association of RAD18 and RAD18-mediated PCNA ubiquitination and translesion DNA synthesis. Interacts (via C-terminus and phosphorylated form) with SLF1 (via BRCT domains); this interaction is required for efficient repair of UV-induced DNA damage. Interacts with SLF2. Interacts with SMC5; this interaction is increased in a SLF1 or SLF2-dependent manner. Expressed in thymus, spleen, brain, and ovary.

It is found in the nucleus. The protein resides in the cytoplasm. It localises to the cytoskeleton. Its subcellular location is the microtubule organizing center. The protein localises to the centrosome. The catalysed reaction is S-ubiquitinyl-[E2 ubiquitin-conjugating enzyme]-L-cysteine + [acceptor protein]-L-lysine = [E2 ubiquitin-conjugating enzyme]-L-cysteine + N(6)-ubiquitinyl-[acceptor protein]-L-lysine.. Its pathway is protein modification; protein ubiquitination. E3 ubiquitin-protein ligase involved in postreplication repair of UV-damaged DNA. Postreplication repair functions in gap-filling of a daughter strand on replication of damaged DNA. Associates to the E2 ubiquitin conjugating enzyme UBE2B to form the UBE2B-RAD18 ubiquitin ligase complex involved in mono-ubiquitination of DNA-associated PCNA on 'Lys-164'. Has ssDNA binding activity. In Mus musculus (Mouse), this protein is E3 ubiquitin-protein ligase RAD18 (Rad18).